The chain runs to 262 residues: Mitochondrial calcium uniporter regulator 1 (262 aa).

The stretch at 138–175 (EKSEFSALRTQNEKVKIELQQLKKQLNDSIVKVRASNK) forms a coiled coil. A helical membrane pass occupies residues 239-261 (TIKYLAGSVFTCLTIALGFYRLW).

Belongs to the CCDC90 family.

The protein resides in the mitochondrion inner membrane. Key regulator of mitochondrial calcium uniporter (mcu) required for calcium entry into mitochondrion. The protein is Mitochondrial calcium uniporter regulator 1 of Xenopus tropicalis (Western clawed frog).